We begin with the raw amino-acid sequence, 1285 residues long: Replicase polyprotein 1TF (1285 aa).

A C4-type; atypical zinc finger spans residues 8–28 (CMCTPAARVFWNAGQVFCTRC). The Peptidase C31 domain occupies 69-180 (ECTPSGCCWL…QPFCPFEEAH (112 aa)). The interval 69-182 (ECTPSGCCWL…FCPFEEAHSS (114 aa)) is PCP1-alpha. Catalysis depends on for Nsp1-alpha papain-like cysteine proteinase activity residues cysteine 76 and histidine 146. A PCP1-beta region spans residues 269–384 (PDVFDGKCWL…IFRFGAHKWY (116 aa)). One can recognise a Peptidase C32 domain in the interval 269 to 385 (PDVFDGKCWL…FRFGAHKWYG (117 aa)). Active-site for Nsp1-beta papain-like cysteine proteinase activity residues include cysteine 276 and histidine 345. Disordered regions lie at residues 752 to 797 (PSDP…DAGA) and 1050 to 1088 (KPVG…SRVS). Residues 775–790 (APASTTTLVREQTPDN) are compositionally biased toward polar residues. Transmembrane regions (helical) follow at residues 1136–1156 (LWLQ…CSVV), 1170–1190 (FLVL…LLLY), 1211–1231 (VMLS…AALW), and 1250–1270 (VISG…FLLF).

It is found in the host nucleus. The protein resides in the host cytoplasm. The protein localises to the host membrane. Its function is as follows. Inhibits host IFN-beta production. Plays a role in the degradation of the host transcriptional activator CREBBP protein. The degradation of host CREBBP which is a key component of the IFN enhanceosome is likely responsible for the inhibition of interferon mediated by Nsp1-alpha. Also participates in the inhibition of host NF-kappa-B activation. In terms of biological role, plays a role in the inhibition of the interferon-activated JAK/STAT signal transduction by mediating the ubiquitination and subsequent proteasomal degradation of host KPNA1. Plays a role in viral replication. The sequence is that of Replicase polyprotein 1TF from Porcine reproductive and respiratory syndrome virus (strain Lelystad) (PRRSV).